The primary structure comprises 420 residues: MKLSAPLLVSLAAFSQAVTALVAFPGAEGFGADAIGGRKGQVYVVTNLNDSGTGSLRDAVSATDRIVVFAVGGVIKISERIVVSKRVTILGQTAPGDGITVYGNGWSFSNADDAIVRYIRIRMGKGGSSGKDAMGIAEGNRMIFDHVSVSWGRDETFSINGDASNITVQNSIIAQGLETHSCGGLIQTDGGVSLFRNLYIDNKTRNPKVKGVNEFTNNVVYNWGGGGGYIAGDSDGQSYANIIGNYFISGPSTSVTAFTRGNANFHGYVDNNYYDPDKDGQLDGSELGVSSSNYGGMAIVSSKYNYPAVAYTMSPAEAVTYVTKYAGASKVRDSVDTQLIAQVQSWGTKGALISDEATMGGPGTLNGGTPAKDTDGDGIPDEAEKQLGTDPNTNDSMKLHSSGYTYLEVWANSLVPSTYH.

The signal sequence occupies residues 1 to 20 (MKLSAPLLVSLAAFSQAVTA). 3 N-linked (GlcNAc...) asparagine glycosylation sites follow: N49, N165, and N202. The active site involves R205. One can recognise an EF-hand domain in the interval 262-297 (NANFHGYVDNNYYDPDKDGQLDGSELGVSSSNYGGM). 5 residues coordinate Ca(2+): D275, D277, D279, Q281, and E286. Residues 357-395 (ATMGGPGTLNGGTPAKDTDGDGIPDEAEKQLGTDPNTND) are disordered. N394 is a glycosylation site (N-linked (GlcNAc...) asparagine).

It belongs to the polysaccharide lyase 1 family. Ca(2+) serves as cofactor.

The protein localises to the secreted. It catalyses the reaction Eliminative cleavage of (1-&gt;4)-alpha-D-galacturonan to give oligosaccharides with 4-deoxy-alpha-D-galact-4-enuronosyl groups at their non-reducing ends.. Pectinolytic enzyme consist of four classes of enzymes: pectin lyase, polygalacturonase, pectin methylesterase and rhamnogalacturonase. Among pectinolytic enzymes, pectin lyase is the most important in depolymerization of pectin, since it cleaves internal glycosidic bonds of highly methylated pectins. Favors pectate, the anion, over pectin, the methyl ester. The sequence is that of Probable pectate lyase C (plyC) from Neosartorya fischeri (strain ATCC 1020 / DSM 3700 / CBS 544.65 / FGSC A1164 / JCM 1740 / NRRL 181 / WB 181) (Aspergillus fischerianus).